Reading from the N-terminus, the 364-residue chain is Fructose-1,6-bisphosphatase class 1 2 (364 aa).

Glu-101, Asp-123, Leu-125, and Asp-126 together coordinate Mg(2+). Substrate is bound by residues Asp-126–Ser-129 and Asn-218. Glu-290 contributes to the Mg(2+) binding site.

Belongs to the FBPase class 1 family. Homotetramer. It depends on Mg(2+) as a cofactor.

The protein localises to the cytoplasm. It catalyses the reaction beta-D-fructose 1,6-bisphosphate + H2O = beta-D-fructose 6-phosphate + phosphate. The protein operates within carbohydrate biosynthesis; gluconeogenesis. This Cupriavidus taiwanensis (strain DSM 17343 / BCRC 17206 / CCUG 44338 / CIP 107171 / LMG 19424 / R1) (Ralstonia taiwanensis (strain LMG 19424)) protein is Fructose-1,6-bisphosphatase class 1 2.